The chain runs to 516 residues: L-amino acid oxidase (516 aa).

The signal sequence occupies residues 1–18 (MNVFFMFSLLFLAALESC). Residues 61–62 (MS), 81–82 (EA), Arg89, and 105–108 (GPMR) contribute to the FAD site. Residue Arg108 coordinates substrate. N-linked (GlcNAc...) asparagine glycosylation occurs at Asn190. Residue Val279 participates in FAD binding. N-linked (GlcNAc...) asparagine glycans are attached at residues Asn299 and Asn404. A disulfide bridge links Cys349 with Cys430. FAD is bound by residues Glu475 and 482 to 487 (GWIDST). 482–483 (GW) provides a ligand contact to substrate.

It belongs to the flavin monoamine oxidase family. FIG1 subfamily. In terms of assembly, homodimer; non-covalently linked. Requires FAD as cofactor. N-glycosylated (14%). The enzymatic activity remains unchanged after deglycosylation. Expressed by the venom gland.

Its subcellular location is the secreted. It carries out the reaction an L-alpha-amino acid + O2 + H2O = a 2-oxocarboxylate + H2O2 + NH4(+). It catalyses the reaction L-leucine + O2 + H2O = 4-methyl-2-oxopentanoate + H2O2 + NH4(+). The enzyme catalyses L-phenylalanine + O2 + H2O = 3-phenylpyruvate + H2O2 + NH4(+). The catalysed reaction is L-tryptophan + O2 + H2O = indole-3-pyruvate + H2O2 + NH4(+). It carries out the reaction L-methionine + O2 + H2O = 4-methylsulfanyl-2-oxobutanoate + H2O2 + NH4(+). It catalyses the reaction L-isoleucine + O2 + H2O = (S)-3-methyl-2-oxopentanoate + H2O2 + NH4(+). Its activity is regulated as follows. Inhibited by the substrate analog N-acetyl tryptophan. Its function is as follows. Catalyzes an oxidative deamination of predominantly hydrophobic and aromatic L-amino acids, thus producing hydrogen peroxide that may contribute to the diverse toxic effects of this enzyme. Is highly active on L-Met&gt;L-Leu&gt;L-Phe&gt;L-Trp=L-Ile. Binds to the cell surface and enables the production of highly localized concentration of hydrogen peroxide in or near the binding interfaces. Does not bind to phospholipids. Induces platelet-rich plasma aggregation, shows cytotoxic effects on some cancer cell lines (B16-F10 (mouse melanoma), PC12 (rat pheochromocytoma), MCF-7 and MDA-MB-231 (human breast carcinoma)) and shows antibacterial activities against both Gram-positive and Gram-negative bacteria. Also exhibits hemorrhage and edema. Does not show cytotoxicity on erythrocytes and peripheral blood mononuclear cells. Its effect on platelets is controversial, since it either induces aggregation or inhibits agonist-induced aggregation. These different effects are probably due to different experimental conditions. In Cerastes cerastes (Horned desert viper), this protein is L-amino acid oxidase.